The sequence spans 221 residues: Flavin-dependent thymidylate synthase (221 aa).

Positions 9-209 (GFVKLLDHMG…PWTYESFIRY (201 aa)) constitute a ThyX domain. Residues S55, 78-80 (RHR), and E86 contribute to the FAD site. Residues 75-78 (QWMR), 86-90 (ELSGR), and R148 each bind dUMP. The ThyX motif signature appears at 78–88 (RHRIASYNELS). FAD-binding positions include 164 to 166 (NAR) and N170. Residue R175 coordinates dUMP. Catalysis depends on R175, which acts as the Involved in ionization of N3 of dUMP, leading to its activation.

This sequence belongs to the thymidylate synthase ThyX family. In terms of assembly, homotetramer. FAD is required as a cofactor.

It catalyses the reaction dUMP + (6R)-5,10-methylene-5,6,7,8-tetrahydrofolate + NADPH + H(+) = dTMP + (6S)-5,6,7,8-tetrahydrofolate + NADP(+). It functions in the pathway pyrimidine metabolism; dTTP biosynthesis. Catalyzes the reductive methylation of 2'-deoxyuridine-5'-monophosphate (dUMP) to 2'-deoxythymidine-5'-monophosphate (dTMP) while utilizing 5,10-methylenetetrahydrofolate (mTHF) as the methyl donor, and NADPH and FADH(2) as the reductant. The polypeptide is Flavin-dependent thymidylate synthase (Pseudothermotoga lettingae (strain ATCC BAA-301 / DSM 14385 / NBRC 107922 / TMO) (Thermotoga lettingae)).